Reading from the N-terminus, the 478-residue chain is PRAME family member 15 (478 aa).

Residues 99-126 form an LRR 1; degenerate repeat; the sequence is RWKLQVLDLQDVCENFWMVWSEAMAHGC. Residues 181–205 form an LRR 2; degenerate repeat; sequence HLCCKKLKILGMPFRNIRSILKMVN. An LRR 3; degenerate repeat occupies 206–232; it reads LDCIQEVEVNCKWVLPILTQFTPYLGH. The LRR 4; degenerate repeat unit spans residues 233–268; it reads MRNLQKLVLSHMDVSRYVSPEQKKEIVTQFTTQFLK. LRR repeat units lie at residues 269 to 294, 295 to 326, 327 to 347, 351 to 378, and 379 to 403; these read LRCL…LSCL, KTSL…SQLK, TLDL…QILL, AATL…ALSR, and CFEL…LLSH.

The protein belongs to the PRAME family.

In Homo sapiens (Human), this protein is PRAME family member 15.